Reading from the N-terminus, the 1299-residue chain is DNA-directed RNA polymerase subunit beta' (1299 aa).

Cys60, Cys62, Cys75, and Cys78 together coordinate Zn(2+). Residues Asp535, Asp537, and Asp539 each coordinate Mg(2+). Residues Cys877, Cys954, Cys961, and Cys964 each contribute to the Zn(2+) site.

The protein belongs to the RNA polymerase beta' chain family. The RNAP catalytic core consists of 2 alpha, 1 beta, 1 beta' and 1 omega subunit. When a sigma factor is associated with the core the holoenzyme is formed, which can initiate transcription. Requires Mg(2+) as cofactor. Zn(2+) is required as a cofactor.

It catalyses the reaction RNA(n) + a ribonucleoside 5'-triphosphate = RNA(n+1) + diphosphate. DNA-dependent RNA polymerase catalyzes the transcription of DNA into RNA using the four ribonucleoside triphosphates as substrates. The sequence is that of DNA-directed RNA polymerase subunit beta' from Renibacterium salmoninarum (strain ATCC 33209 / DSM 20767 / JCM 11484 / NBRC 15589 / NCIMB 2235).